A 444-amino-acid polypeptide reads, in one-letter code: Gentisate transporter (444 aa).

Helical transmembrane passes span 42–64, 79–101, 108–127, 131–153, 166–188, 198–220, 252–274, 289–311, 318–340, 344–366, 378–400, and 410–428; these read AAVL…YGTV, LGTI…GRLS, AAVI…CAFA, WVFG…SVNA, AWAT…LALV, WRFM…MKVI, WISI…LGTW, ALMF…AWAG, RSGV…YPPV, YVIL…AAVA, LGWA…GLLL, and FIMF…SVLL.

The protein belongs to the major facilitator superfamily. Aromatic acid:H(+) symporter (AAHS) (TC 2.A.1.15) family.

The protein localises to the cell membrane. In terms of biological role, transport of gentisate (2,5-dihydroxybenzoate) into the cell. Does not transport 3-hydroxybenzoate or benzoate. This chain is Gentisate transporter (genK), found in Corynebacterium glutamicum (strain ATCC 13032 / DSM 20300 / JCM 1318 / BCRC 11384 / CCUG 27702 / LMG 3730 / NBRC 12168 / NCIMB 10025 / NRRL B-2784 / 534).